Reading from the N-terminus, the 367-residue chain is Quinolinate synthase (367 aa).

Iminosuccinate-binding residues include histidine 45 and serine 62. Cysteine 109 serves as a coordination point for [4Fe-4S] cluster. Iminosuccinate contacts are provided by residues 140 to 142 (YVN) and serine 161. Position 229 (cysteine 229) interacts with [4Fe-4S] cluster. Iminosuccinate contacts are provided by residues 255-257 (HPE) and threonine 272. Position 319 (cysteine 319) interacts with [4Fe-4S] cluster.

It belongs to the quinolinate synthase family. Type 3 subfamily. [4Fe-4S] cluster serves as cofactor.

It localises to the cytoplasm. The enzyme catalyses iminosuccinate + dihydroxyacetone phosphate = quinolinate + phosphate + 2 H2O + H(+). The protein operates within cofactor biosynthesis; NAD(+) biosynthesis; quinolinate from iminoaspartate: step 1/1. Catalyzes the condensation of iminoaspartate with dihydroxyacetone phosphate to form quinolinate. The sequence is that of Quinolinate synthase from Geobacillus thermodenitrificans (strain NG80-2).